The following is a 197-amino-acid chain: Guanylate kinase (197 aa).

The disordered stretch occupies residues 1–30; sequence MAATPRGTSPVPPDARPRLTVLSGPSGVGK. In terms of domain architecture, Guanylate kinase-like spans 17–197; the sequence is PRLTVLSGPS…RELLALTNVV (181 aa). 24–31 serves as a coordination point for ATP; the sequence is GPSGVGKS.

This sequence belongs to the guanylate kinase family.

It is found in the cytoplasm. The catalysed reaction is GMP + ATP = GDP + ADP. Its function is as follows. Essential for recycling GMP and indirectly, cGMP. This Streptomyces coelicolor (strain ATCC BAA-471 / A3(2) / M145) protein is Guanylate kinase (gmk).